Reading from the N-terminus, the 350-residue chain is Holliday junction branch migration complex subunit RuvB (350 aa).

The tract at residues 4-184 is large ATPase domain (RuvB-L); the sequence is TDRLIAAQPQ…FGIVQRLEFY (181 aa). ATP is bound by residues I23, R24, G65, K68, T69, T70, 131 to 133, R174, Y184, and R221; that span reads EDY. Mg(2+) is bound at residue T69. The tract at residues 185–255 is small ATPAse domain (RuvB-S); that stretch reads AVEELTEIVV…IADQALNMLH (71 aa). Positions 258–350 are head domain (RuvB-H); the sequence is RHGLDHMDRR…PLTPPGESDA (93 aa). DNA is bound by residues R294, R313, and R318.

It belongs to the RuvB family. Homohexamer. Forms an RuvA(8)-RuvB(12)-Holliday junction (HJ) complex. HJ DNA is sandwiched between 2 RuvA tetramers; dsDNA enters through RuvA and exits via RuvB. An RuvB hexamer assembles on each DNA strand where it exits the tetramer. Each RuvB hexamer is contacted by two RuvA subunits (via domain III) on 2 adjacent RuvB subunits; this complex drives branch migration. In the full resolvosome a probable DNA-RuvA(4)-RuvB(12)-RuvC(2) complex forms which resolves the HJ.

The protein resides in the cytoplasm. The enzyme catalyses ATP + H2O = ADP + phosphate + H(+). In terms of biological role, the RuvA-RuvB-RuvC complex processes Holliday junction (HJ) DNA during genetic recombination and DNA repair, while the RuvA-RuvB complex plays an important role in the rescue of blocked DNA replication forks via replication fork reversal (RFR). RuvA specifically binds to HJ cruciform DNA, conferring on it an open structure. The RuvB hexamer acts as an ATP-dependent pump, pulling dsDNA into and through the RuvAB complex. RuvB forms 2 homohexamers on either side of HJ DNA bound by 1 or 2 RuvA tetramers; 4 subunits per hexamer contact DNA at a time. Coordinated motions by a converter formed by DNA-disengaged RuvB subunits stimulates ATP hydrolysis and nucleotide exchange. Immobilization of the converter enables RuvB to convert the ATP-contained energy into a lever motion, pulling 2 nucleotides of DNA out of the RuvA tetramer per ATP hydrolyzed, thus driving DNA branch migration. The RuvB motors rotate together with the DNA substrate, which together with the progressing nucleotide cycle form the mechanistic basis for DNA recombination by continuous HJ branch migration. Branch migration allows RuvC to scan DNA until it finds its consensus sequence, where it cleaves and resolves cruciform DNA. The sequence is that of Holliday junction branch migration complex subunit RuvB from Chromohalobacter salexigens (strain ATCC BAA-138 / DSM 3043 / CIP 106854 / NCIMB 13768 / 1H11).